Reading from the N-terminus, the 71-residue chain is General transcription and DNA repair factor IIH subunit TFB5 (71 aa).

It belongs to the TFB5 family. As to quaternary structure, component of the 7-subunit TFIIH core complex.

It is found in the nucleus. The protein localises to the chromosome. Its function is as follows. Component of the general transcription and DNA repair factor IIH (TFIIH) core complex, which is involved in general and transcription-coupled nucleotide excision repair (NER) of damaged DNA and in RNA transcription by RNA polymerase II. In NER, TFIIH acts by opening DNA around the lesion to allow the excision of the damaged oligonucleotide and its replacement by a new DNA fragment. In transcription, TFIIH has an essential role in transcription initiation. When the pre-initiation complex (PIC) has been established, TFIIH is required for promoter opening and promoter escape. Necessary for the stability of the TFIIH complex and for the presence of normal levels of TFIIH in the cell. Required for efficient binding of TFIIH to damaged DNA. Dispensable for normal development, but required when transcription is challenged. This is General transcription and DNA repair factor IIH subunit TFB5 from Caenorhabditis elegans.